Reading from the N-terminus, the 380-residue chain is Tetraacyldisaccharide 4'-kinase (380 aa).

51-58 contacts ATP; it reads SVGGTGKT.

The protein belongs to the LpxK family.

It carries out the reaction a lipid A disaccharide + ATP = a lipid IVA + ADP + H(+). Its pathway is glycolipid biosynthesis; lipid IV(A) biosynthesis; lipid IV(A) from (3R)-3-hydroxytetradecanoyl-[acyl-carrier-protein] and UDP-N-acetyl-alpha-D-glucosamine: step 6/6. Transfers the gamma-phosphate of ATP to the 4'-position of a tetraacyldisaccharide 1-phosphate intermediate (termed DS-1-P) to form tetraacyldisaccharide 1,4'-bis-phosphate (lipid IVA). This chain is Tetraacyldisaccharide 4'-kinase, found in Bacteroides thetaiotaomicron (strain ATCC 29148 / DSM 2079 / JCM 5827 / CCUG 10774 / NCTC 10582 / VPI-5482 / E50).